Reading from the N-terminus, the 340-residue chain is tRNA (cytosine(34)-C(5))-methyltransferase, mitochondrial (340 aa).

S-adenosyl-L-methionine is bound by residues 139–145 (CAAPGGK), Glu-162, Asp-193, and Asp-211. Residue Cys-265 is the Nucleophile of the active site.

It belongs to the class I-like SAM-binding methyltransferase superfamily. RsmB/NOP family.

The protein localises to the mitochondrion matrix. It carries out the reaction cytidine(34) in mitochondrial tRNA + S-adenosyl-L-methionine = 5-methylcytidine(34) in mitochondrial tRNA + S-adenosyl-L-homocysteine + H(+). Mitochondrial tRNA methyltransferase that mediates methylation of cytosine to 5-methylcytosine (m5C) at position 34 of mt-tRNA(Met). mt-tRNA(Met) methylation at cytosine(34) takes place at the wobble position of the anticodon and initiates the formation of 5-formylcytosine (f(5)c) at this position. mt-tRNA(Met) containing the f(5)c modification at the wobble position enables recognition of the AUA codon in addition to the AUG codon, expanding codon recognition in mitochondrial translation. This Homo sapiens (Human) protein is tRNA (cytosine(34)-C(5))-methyltransferase, mitochondrial.